The following is a 122-amino-acid chain: Basic phospholipase A2 homolog (122 aa).

7 disulfides stabilise this stretch: Cys-26/Cys-116, Cys-28/Cys-44, Cys-43/Cys-96, Cys-49/Cys-122, Cys-50/Cys-89, Cys-57/Cys-82, and Cys-75/Cys-87. Positions 106–117 (KKHRVTVKFLCK) are important for membrane-damaging activities in eukaryotes and bacteria; heparin-binding.

The protein belongs to the phospholipase A2 family. Group II subfamily. K49 sub-subfamily. As to quaternary structure, homodimer; non-covalently linked. In terms of tissue distribution, expressed by the venom gland.

Its subcellular location is the secreted. Snake venom phospholipase A2 (PLA2) that has almost no phospholipase A2 activity. Is myotoxic. Displays edema-inducing activities. A model of myotoxic mechanism has been proposed: an apo Lys49-PLA2 is activated by the entrance of a hydrophobic molecule (e.g. fatty acid) at the hydrophobic channel of the protein leading to a reorientation of a monomer. This reorientation causes a transition between 'inactive' to 'active' states, causing alignment of C-terminal and membrane-docking sites (MDoS) side-by-side and putting the membrane-disruption sites (MDiS) in the same plane, exposed to solvent and in a symmetric position for both monomers. The MDoS region stabilizes the toxin on membrane by the interaction of charged residues with phospholipid head groups. Subsequently, the MDiS region destabilizes the membrane with penetration of hydrophobic residues. This insertion causes a disorganization of the membrane, allowing an uncontrolled influx of ions (i.e. calcium and sodium), and eventually triggering irreversible intracellular alterations and cell death. The sequence is that of Basic phospholipase A2 homolog from Protobothrops mucrosquamatus (Taiwan habu).